The primary structure comprises 210 residues: Small ribosomal subunit protein uS3 (210 aa).

In terms of domain architecture, KH type-2 spans 17–86 (IDEFLEKELR…NPQIDVQEIK (70 aa)).

Belongs to the universal ribosomal protein uS3 family. Part of the 30S ribosomal subunit.

Its function is as follows. Binds the lower part of the 30S subunit head. The protein is Small ribosomal subunit protein uS3 of Pyrococcus abyssi (strain GE5 / Orsay).